A 329-amino-acid chain; its full sequence is DNA-directed RNA polymerase subunit alpha (329 aa).

The tract at residues 1 to 235 is alpha N-terminal domain (alpha-NTD); sequence MQNSIIGFLK…EQLEAFVDLR (235 aa). Positions 249-329 are alpha C-terminal domain (alpha-CTD); the sequence is FEPILLRPVD…KWPPSSILEE (81 aa).

This sequence belongs to the RNA polymerase alpha chain family. Homodimer. The RNAP catalytic core consists of 2 alpha, 1 beta, 1 beta' and 1 omega subunit. When a sigma factor is associated with the core the holoenzyme is formed, which can initiate transcription.

It catalyses the reaction RNA(n) + a ribonucleoside 5'-triphosphate = RNA(n+1) + diphosphate. Functionally, DNA-dependent RNA polymerase catalyzes the transcription of DNA into RNA using the four ribonucleoside triphosphates as substrates. This chain is DNA-directed RNA polymerase subunit alpha, found in Buchnera aphidicola subsp. Schizaphis graminum (strain Sg).